Here is a 383-residue protein sequence, read N- to C-terminus: Ceramide synthase 3 (383 aa).

Residues 32 to 52 traverse the membrane as a helical segment; that stretch reads VFVKPSHLYVTIPYAFLLLII. A homeobox-like region spans residues 66 to 127; sequence KSFGIKETVR…RSRRNQERPS (62 aa). The TLC domain occupies 130 to 331; the sequence is KKFQEACWRF…ILKMLNRCIF (202 aa). The next 5 membrane-spanning stretches (helical) occupy residues 139-159, 174-194, 205-225, 264-284, and 298-318; these read FAFY…KPWL, LLPS…SLLF, FLAH…SWCA, FFIF…FWIL, and FFSY…HLYW. Residues 319 to 383 lie on the Cytoplasmic side of the membrane; sequence GYYILKMLNR…HLIPNGQHGH (65 aa). Ser340 carries the post-translational modification Phosphoserine. The span at 342–355 shows a compositional bias: acidic residues; sequence DEDYEEEEEEEEEE. A disordered region spans residues 342 to 363; it reads DEDYEEEEEEEEEEATKGKEMD.

As to expression, expressed in the epidermis, where it localizes at the interface between the stratum granulosum and the stratum corneum (at protein level).

Its subcellular location is the endoplasmic reticulum membrane. The catalysed reaction is a very long-chain fatty acyl-CoA + a sphingoid base = an N-(very-long-chain fatty acyl)-sphingoid base + CoA + H(+). The enzyme catalyses docosanoyl-CoA + sphinganine = N-docosanoylsphinganine + CoA + H(+). It carries out the reaction tetracosanoyl-CoA + sphinganine = N-tetracosanoylsphinganine + CoA + H(+). It catalyses the reaction hexacosanoyl-CoA + sphinganine = N-hexacosanoylsphinganine + CoA + H(+). The catalysed reaction is 2-hydroxydocosanoyl-CoA + sphinganine = N-(2-hydroxydocosanoyl)-sphinganine + CoA + H(+). The enzyme catalyses 2-hydroxytetracosanoyl-CoA + sphinganine = N-(2-hydroxytetracosanoyl)-sphinganine + CoA + H(+). It carries out the reaction an ultra-long-chain fatty acyl-CoA + a sphingoid base = an N-(ultra-long-chain-acyl)-sphingoid base + CoA + H(+). It catalyses the reaction octacosanoyl-CoA + sphinganine = N-(octacosanoyl)-sphinganine + CoA + H(+). The catalysed reaction is a fatty acyl-CoA + sphing-4-enine = an N-acylsphing-4-enine + CoA + H(+). The enzyme catalyses sphinganine + octadecanoyl-CoA = N-(octadecanoyl)-sphinganine + CoA + H(+). It carries out the reaction 2-hydroxyoctadecanoyl-CoA + sphinganine = N-(2-hydroxyoctadecanoyl)-sphinganine + CoA + H(+). The protein operates within lipid metabolism; sphingolipid metabolism. In terms of biological role, ceramide synthase that catalyzes the transfer of the acyl chain from acyl-CoA to a sphingoid base, with high selectivity toward very- and ultra-long-chain fatty acyl-CoA (chain length greater than C22). N-acylates sphinganine and sphingosine bases to form dihydroceramides and ceramides in de novo synthesis and salvage pathways, respectively. It is crucial for the synthesis of ultra-long-chain ceramides in the epidermis, to maintain epidermal lipid homeostasis and terminal differentiation. The chain is Ceramide synthase 3 from Homo sapiens (Human).